The sequence spans 396 residues: Alanine racemase (396 aa).

The active-site Proton acceptor; specific for D-alanine is the K46. K46 bears the N6-(pyridoxal phosphate)lysine mark. R145 contributes to the substrate binding site. Residue Y280 is the Proton acceptor; specific for L-alanine of the active site. M328 provides a ligand contact to substrate.

The protein belongs to the alanine racemase family. Requires pyridoxal 5'-phosphate as cofactor.

It catalyses the reaction L-alanine = D-alanine. It functions in the pathway amino-acid biosynthesis; D-alanine biosynthesis; D-alanine from L-alanine: step 1/1. Catalyzes the interconversion of L-alanine and D-alanine. May also act on other amino acids. The protein is Alanine racemase (alr) of Brucella suis (strain ATCC 23445 / NCTC 10510).